We begin with the raw amino-acid sequence, 857 residues long: Envelope glycoprotein gp160 (857 aa).

The first 26 residues, 1-26, serve as a signal peptide directing secretion; sequence MAHTSNHLFILLLLISVYGFLGHKKN. At 27-682 the chain is on the extracellular side; it reads YVTVFYGIPA…FTSWMAYIRL (656 aa). An N-linked (GlcNAc...) asparagine; by host glycan is attached at Asn39. The cysteines at positions 46 and 59 are disulfide-linked. Asn72, Asn81, Asn116, Asn121, Asn142, Asn150, Asn167, Asn193, Asn205, Asn237, Asn240, Asn271, Asn277, Asn288, Asn299, Asn309, Asn364, Asn397, Asn407, Asn447, Asn464, and Asn469 each carry an N-linked (GlcNAc...) asparagine; by host glycan. Intrachain disulfides connect Cys103-Cys213, Cys110-Cys204, Cys115-Cys164, Cys226-Cys256, and Cys236-Cys248. Residues 115 to 163 form a V1 region; that stretch reads CNNTGTNTTTKPITTPITTTKPSENLLNDTSPCIKNDTCPGIGLENTVD. Positions 164–204 are V2; the sequence is CYFNMTGLRRDEKKQYKDTWYEKDLECNGNSTSTICYMRTC. Residues 304–336 are V3; that stretch reads CRRPGNKTVIPITIMSGLNFHSQPLNTRPRQAW. Residues Cys304 and Cys337 are joined by a disulfide bond. 2 cysteine pairs are disulfide-bonded: Cys389–Cys446 and Cys396–Cys419. Residues 396 to 419 are V4; sequence CNMTWFLNWVENRTGTTQKNYVTC. Residues 464-472 are V5; it reads NDTKTNITM. Positions 515-535 are fusion peptide; it reads GVMVLGFLGLLAMAGSAMGAT. An immunosuppression region spans residues 578-594; the sequence is LQTRVTAIEKYLKDQAL. Asn614, Asn623, and Asn639 each carry an N-linked (GlcNAc...) asparagine; by host glycan. Residues 627-648 are a coiled coil; the sequence is QQWEKRVNFLDANITALLEEAQ. The MPER; binding to GalCer stretch occupies residues 660 to 681; it reads KLNSWDVFGNWFDFTSWMAYIR. Residues 683-703 form a helical membrane-spanning segment; sequence GLYVVAGLIVLRIVIYIMQML. Residues 704–857 lie on the Cytoplasmic side of the membrane; sequence ARLRKGYRPV…IRQGLELALL (154 aa). A YXXV motif; contains endocytosis signal motif is present at residues 710 to 713; that stretch reads YRPV. Residue Cys776 is the site of S-palmitoyl cysteine; by host attachment. The Di-leucine internalization motif signature appears at 856-857; that stretch reads LL.

As to quaternary structure, the mature envelope protein (Env) consists of a homotrimer of non-covalently associated gp120-gp41 heterodimers. The resulting complex protrudes from the virus surface as a spike. There seems to be as few as 10 spikes on the average virion. Interacts with human CD4, CCR5 and CXCR4, to form a P4HB/PDI-CD4-CXCR4-gp120 complex. Gp120 also interacts with the C-type lectins CD209/DC-SIGN and CLEC4M/DC-SIGNR (collectively referred to as DC-SIGN(R)). Gp120 and gp41 interact with GalCer. The mature envelope protein (Env) consists of a homotrimer of non-covalently associated gp120-gp41 heterodimers. The resulting complex protrudes from the virus surface as a spike. There seems to be as few as 10 spikes on the average virion. Post-translationally, specific enzymatic cleavages in vivo yield mature proteins. Envelope glycoproteins are synthesized as an inactive precursor that is heavily N-glycosylated and processed likely by host cell furin in the Golgi to yield the mature SU and TM proteins. The cleavage site between SU and TM requires the minimal sequence [KR]-X-[KR]-R. In terms of processing, palmitoylation of the transmembrane protein and of Env polyprotein (prior to its proteolytic cleavage) is essential for their association with host cell membrane lipid rafts. Palmitoylation is therefore required for envelope trafficking to classical lipid rafts, but not for viral replication.

It is found in the virion membrane. Its subcellular location is the host cell membrane. The protein resides in the host endosome membrane. In terms of biological role, the surface protein gp120 (SU) attaches the virus to the host lymphoid cell by binding to the primary receptor CD4. This interaction induces a structural rearrangement creating a high affinity binding site for a chemokine coreceptor like CXCR4 and/or CCR5. This peculiar 2 stage receptor-interaction strategy allows gp120 to maintain the highly conserved coreceptor-binding site in a cryptic conformation, protected from neutralizing antibodies. Since CD4 also displays a binding site for the disulfide-isomerase P4HB/PDI, a P4HB/PDI-CD4-CXCR4-gp120 complex may form. In that complex, P4HB/PDI could reach and reduce gp120 disulfide bonds, causing major conformational changes in gp120. TXN, another PDI family member could also be involved in disulfide rearrangements in Env during fusion. These changes are transmitted to the transmembrane protein gp41 and are thought to activate its fusogenic potential by unmasking its fusion peptide. Its function is as follows. The surface protein gp120 is a ligand for CD209/DC-SIGN and CLEC4M/DC-SIGNR, which are respectively found on dendritic cells (DCs), and on endothelial cells of liver sinusoids and lymph node sinuses. These interactions allow capture of viral particles at mucosal surfaces by these cells and subsequent transmission to permissive cells. DCs are professional antigen presenting cells, critical for host immunity by inducing specific immune responses against a broad variety of pathogens. They act as sentinels in various tissues where they take up antigen, process it, and present it to T-cells following migration to lymphoid organs. HIV subverts the migration properties of dendritic cells to gain access to CD4+ T-cells in lymph nodes. Virus transmission to permissive T-cells occurs either in trans (without DCs infection, through viral capture and transmission), or in cis (following DCs productive infection, through the usual CD4-gp120 interaction), thereby inducing a robust infection. In trans infection, bound virions remain infectious over days and it is proposed that they are not degraded, but protected in non-lysosomal acidic organelles within the DCs close to the cell membrane thus contributing to the viral infectious potential during DCs' migration from the periphery to the lymphoid tissues. On arrival at lymphoid tissues, intact virions recycle back to DCs' cell surface allowing virus transmission to CD4+ T-cells. Virion capture also seems to lead to MHC-II-restricted viral antigen presentation, and probably to the activation of HIV-specific CD4+ cells. The transmembrane protein gp41 (TM) acts as a class I viral fusion protein. Under the current model, the protein has at least 3 conformational states: pre-fusion native state, pre-hairpin intermediate state, and post-fusion hairpin state. During fusion of viral and target intracellular membranes, the coiled coil regions (heptad repeats) assume a trimer-of-hairpins structure, positioning the fusion peptide in close proximity to the C-terminal region of the ectodomain. The formation of this structure appears to drive apposition and subsequent fusion of viral and target cell membranes. Complete fusion occurs in host cell endosomes and is dynamin-dependent, however some lipid transfer might occur at the plasma membrane. The virus undergoes clathrin-dependent internalization long before endosomal fusion, thus minimizing the surface exposure of conserved viral epitopes during fusion and reducing the efficacy of inhibitors targeting these epitopes. Membranes fusion leads to delivery of the nucleocapsid into the cytoplasm. Functionally, the envelope glycoprotein gp160 precursor down-modulates cell surface CD4 antigen by interacting with it in the endoplasmic reticulum and blocking its transport to the cell surface. In terms of biological role, the gp120-gp41 heterodimer seems to contribute to T-cell depletion during HIV-1 infection. The envelope glycoproteins expressed on the surface of infected cells induce apoptosis through an interaction with uninfected cells expressing the receptor (CD4) and the coreceptors CXCR4 or CCR5. This type of bystander killing may be obtained by at least three distinct mechanisms. First, the interaction between the 2 cells can induce cellular fusion followed by nuclear fusion within the syncytium. Syncytia are condemned to die from apoptosis. Second, the 2 interacting cells may not fuse entirely and simply exchange plasma membrane lipids, after a sort of hemifusion process, followed by rapid death. Third, it is possible that virus-infected cells, on the point of undergoing apoptosis, fuse with CD4-expressing cells, in which case apoptosis is rapidly transmitted from one cell to the other and thus occurs in a sort of contagious fashion. Its function is as follows. The gp120-gp41 heterodimer allows rapid transcytosis of the virus through CD4 negative cells such as simple epithelial monolayers of the intestinal, rectal and endocervical epithelial barriers. Both gp120 and gp41 specifically recognize glycosphingolipids galactosyl-ceramide (GalCer) or 3' sulfo-galactosyl-ceramide (GalS) present in the lipid rafts structures of epithelial cells. Binding to these alternative receptors allows the rapid transcytosis of the virus through the epithelial cells. This transcytotic vesicle-mediated transport of virions from the apical side to the basolateral side of the epithelial cells does not involve infection of the cells themselves. The protein is Envelope glycoprotein gp160 (env) of Homo sapiens (Human).